The chain runs to 408 residues: Tryptophan synthase beta chain (408 aa).

The residue at position 97 (K97) is an N6-(pyridoxal phosphate)lysine.

It belongs to the TrpB family. As to quaternary structure, tetramer of two alpha and two beta chains. Requires pyridoxal 5'-phosphate as cofactor.

It catalyses the reaction (1S,2R)-1-C-(indol-3-yl)glycerol 3-phosphate + L-serine = D-glyceraldehyde 3-phosphate + L-tryptophan + H2O. The protein operates within amino-acid biosynthesis; L-tryptophan biosynthesis; L-tryptophan from chorismate: step 5/5. Functionally, the beta subunit is responsible for the synthesis of L-tryptophan from indole and L-serine. This Pseudomonas syringae pv. syringae protein is Tryptophan synthase beta chain (trpB).